A 532-amino-acid chain; its full sequence is Flavin-containing monooxygenase 1 (532 aa).

The Lumenal segment spans residues 1 to 510; that stretch reads MVKRVAIVGA…TRTIQESPSS (510 aa). FAD-binding positions include 9 to 13, glutamate 32, 40 to 41, and 61 to 62; these read GAGVS, LW, and NS. NADP(+) is bound by residues 60–61 and 195–198; these read SN and SGTD. The helical transmembrane segment at 511–531 threads the bilayer; sequence FETLLKLFSFLALLIAVFLIF. Leucine 532 is a topological domain (cytoplasmic).

This sequence belongs to the FMO family. Requires FAD as cofactor. As to expression, liver.

It is found in the endoplasmic reticulum membrane. The catalysed reaction is hypotaurine + NADPH + O2 + H(+) = taurine + NADP(+) + H2O. It carries out the reaction hypotaurine + NADH + O2 + H(+) = taurine + NAD(+) + H2O. The enzyme catalyses trimethylamine + NADPH + O2 = trimethylamine N-oxide + NADP(+) + H2O. It catalyses the reaction N,N-dimethylaniline + NADPH + O2 + H(+) = N,N-dimethylaniline N-oxide + NADP(+) + H2O. In terms of biological role, broad spectrum monooxygenase that catalyzes the oxygenation of a wide variety of nitrogen- and sulfur-containing compounds including xenobiotics. Catalyzes the S-oxygenation of hypotaurine to produce taurine, an organic osmolyte involved in cell volume regulation as well as a variety of cytoprotective and developmental processes. In vitro, catalyzes the N-oxygenation of trimethylamine (TMA) to produce trimethylamine N-oxide (TMAO) and could therefore participate to the detoxification of this compound that is generated by the action of gut microbiota from dietary precursors such as choline, choline containing compounds, betaine or L-carnitine. The sequence is that of Flavin-containing monooxygenase 1 from Mus musculus (Mouse).